Here is a 1305-residue protein sequence, read N- to C-terminus: Myosin-IIIb (1305 aa).

In terms of domain architecture, Protein kinase spans 15–281; the sequence is WEIIETIGKG…VTHLLDHPFI (267 aa). ATP contacts are provided by residues 21–29 and lysine 44; that span reads IGKGTYGKV. The active-site Proton acceptor is aspartate 144. A Myosin motor domain is found at 331-1046; sequence CLEDDLVNLE…HVEQLNLLLR (716 aa). The tract at residues 927-949 is actin-binding; the sequence is LMDLLSKMVVGQPHFIRCIKPND. IQ domains follow at residues 1048–1077 and 1075–1104; these read VMGR…KREK and REKG…RRSE. Disordered regions lie at residues 1093–1164 and 1200–1233; these read RKLK…VTSG and SPCE…MLSS.

This sequence in the C-terminal section; belongs to the TRAFAC class myosin-kinesin ATPase superfamily. Myosin family. The protein in the N-terminal section; belongs to the protein kinase superfamily. STE Ser/Thr protein kinase family. Interacts (via C-terminus) with ESPN. Interacts (via C-terminus) with ESPNL. In terms of tissue distribution, expressed in the cochlear hair cells (at protein level). Expressed in utricle hair bundles (at protein level).

It localises to the cytoplasm. It is found in the cytoskeleton. The protein resides in the cell projection. Its subcellular location is the stereocilium. The catalysed reaction is L-seryl-[protein] + ATP = O-phospho-L-seryl-[protein] + ADP + H(+). It catalyses the reaction L-threonyl-[protein] + ATP = O-phospho-L-threonyl-[protein] + ADP + H(+). Functionally, probable actin-based motor with a protein kinase activity. Required for normal cochlear hair bundle development and hearing. Plays an important role in the early steps of cochlear hair bundle morphogenesis. Influences the number and lengths of stereocilia to be produced and limits the growth of microvilli within the forming auditory hair bundles thereby contributing to the architecture of the hair bundle, including its staircase pattern. Involved in the elongation of actin in stereocilia tips by transporting the actin regulatory factor ESPN to the plus ends of actin filaments. The protein is Myosin-IIIb (Myo3b) of Mus musculus (Mouse).